The sequence spans 274 residues: Acyl-[acyl-carrier-protein]--UDP-N-acetylglucosamine O-acyltransferase (274 aa).

Belongs to the transferase hexapeptide repeat family. LpxA subfamily. As to quaternary structure, homotrimer.

It is found in the cytoplasm. It carries out the reaction a (3R)-hydroxyacyl-[ACP] + UDP-N-acetyl-alpha-D-glucosamine = a UDP-3-O-[(3R)-3-hydroxyacyl]-N-acetyl-alpha-D-glucosamine + holo-[ACP]. The protein operates within glycolipid biosynthesis; lipid IV(A) biosynthesis; lipid IV(A) from (3R)-3-hydroxytetradecanoyl-[acyl-carrier-protein] and UDP-N-acetyl-alpha-D-glucosamine: step 1/6. Its function is as follows. Involved in the biosynthesis of lipid A, a phosphorylated glycolipid that anchors the lipopolysaccharide to the outer membrane of the cell. This Bartonella henselae (strain ATCC 49882 / DSM 28221 / CCUG 30454 / Houston 1) (Rochalimaea henselae) protein is Acyl-[acyl-carrier-protein]--UDP-N-acetylglucosamine O-acyltransferase.